The following is a 586-amino-acid chain: Putative Lon protease homolog (586 aa).

The Lon proteolytic domain occupies glycine 346 to leucine 543. Catalysis depends on residues serine 438 and lysine 481.

Belongs to the peptidase S16 family.

The polypeptide is Putative Lon protease homolog (ycbZ) (Escherichia coli (strain K12)).